The following is a 229-amino-acid chain: MTASLARLERKLGYTFKNQDQMLLALTHRSYAGRNNERLEFLGDAILNFVAGEALFERFPQAREGQLSRLRARLVKGETLARLARGFDLGEYLRLGSGELKSGGFRRESILADALEALIGAIYLDADMDTARERVLAWLADEFEGLTLVDTNKDPKTRLQEFLQSRSCELPRYEVVDIQGEPHCRTFFVECEVVLLNNKSRGQGVSRRIAEQVAAASALIALGVENGND.

The RNase III domain occupies 5–127 (LARLERKLGY…LIGAIYLDAD (123 aa)). Glu40 contacts Mg(2+). The active site involves Asp44. Positions 113 and 116 each coordinate Mg(2+). Glu116 is a catalytic residue. One can recognise a DRBM domain in the interval 154-224 (DPKTRLQEFL…AASALIALGV (71 aa)).

It belongs to the ribonuclease III family. In terms of assembly, homodimer. The cofactor is Mg(2+).

The protein localises to the cytoplasm. The catalysed reaction is Endonucleolytic cleavage to 5'-phosphomonoester.. Its function is as follows. Digests double-stranded RNA. Involved in the processing of primary rRNA transcript to yield the immediate precursors to the large and small rRNAs (23S and 16S). Processes some mRNAs, and tRNAs when they are encoded in the rRNA operon. Processes pre-crRNA and tracrRNA of type II CRISPR loci if present in the organism. The chain is Ribonuclease 3 from Pseudomonas putida (strain GB-1).